Consider the following 261-residue polypeptide: Cytochrome c oxidase subunit 3 (261 aa).

Over 1-15 (MTHQTHAYHMVDPSP) the chain is Mitochondrial matrix. Residues 16–34 (WPLTGALSALLMTSGLTMW) form a helical membrane-spanning segment. The Mitochondrial intermembrane segment spans residues 35 to 40 (FHYHSV). A helical membrane pass occupies residues 41 to 66 (TLLLLGLTTNILTMFQWWRDVVREGT). Over 67-72 (FQGHHT) the chain is Mitochondrial matrix. A helical transmembrane segment spans residues 73-105 (PVVQESLRYGMILFITSEVLFFTGFFWAFYHSS). Residues 106–128 (LAPTPELGSYWPPVGVYPLNPLE) lie on the Mitochondrial intermembrane side of the membrane. A helical transmembrane segment spans residues 129–152 (VPLLNTSVLLASGVTITWAHHSLM). Residues 153-155 (EGN) are Mitochondrial matrix-facing. A helical transmembrane segment spans residues 156 to 183 (RKNMLQALLITILLGVYFTLLQMFEYYE). Topologically, residues 184–190 (ASFTISD) are mitochondrial intermembrane. A helical transmembrane segment spans residues 191-223 (GIYGSTFFVTTGFHGLHVIIGSTFLLTCFIRQL). Residues 224-232 (KFHFTSNHH) lie on the Mitochondrial matrix side of the membrane. The helical transmembrane segment at 233-256 (FGFEAAAWYWHFVDVVWLFLYLSI) threads the bilayer. Topologically, residues 257–261 (YWWGS) are mitochondrial intermembrane.

The protein belongs to the cytochrome c oxidase subunit 3 family. As to quaternary structure, component of the cytochrome c oxidase (complex IV, CIV), a multisubunit enzyme composed of 14 subunits. The complex is composed of a catalytic core of 3 subunits MT-CO1, MT-CO2 and MT-CO3, encoded in the mitochondrial DNA, and 11 supernumerary subunits COX4I, COX5A, COX5B, COX6A, COX6B, COX6C, COX7A, COX7B, COX7C, COX8 and NDUFA4, which are encoded in the nuclear genome. The complex exists as a monomer or a dimer and forms supercomplexes (SCs) in the inner mitochondrial membrane with NADH-ubiquinone oxidoreductase (complex I, CI) and ubiquinol-cytochrome c oxidoreductase (cytochrome b-c1 complex, complex III, CIII), resulting in different assemblies (supercomplex SCI(1)III(2)IV(1) and megacomplex MCI(2)III(2)IV(2)).

The protein resides in the mitochondrion inner membrane. It catalyses the reaction 4 Fe(II)-[cytochrome c] + O2 + 8 H(+)(in) = 4 Fe(III)-[cytochrome c] + 2 H2O + 4 H(+)(out). Its function is as follows. Component of the cytochrome c oxidase, the last enzyme in the mitochondrial electron transport chain which drives oxidative phosphorylation. The respiratory chain contains 3 multisubunit complexes succinate dehydrogenase (complex II, CII), ubiquinol-cytochrome c oxidoreductase (cytochrome b-c1 complex, complex III, CIII) and cytochrome c oxidase (complex IV, CIV), that cooperate to transfer electrons derived from NADH and succinate to molecular oxygen, creating an electrochemical gradient over the inner membrane that drives transmembrane transport and the ATP synthase. Cytochrome c oxidase is the component of the respiratory chain that catalyzes the reduction of oxygen to water. Electrons originating from reduced cytochrome c in the intermembrane space (IMS) are transferred via the dinuclear copper A center (CU(A)) of subunit 2 and heme A of subunit 1 to the active site in subunit 1, a binuclear center (BNC) formed by heme A3 and copper B (CU(B)). The BNC reduces molecular oxygen to 2 water molecules using 4 electrons from cytochrome c in the IMS and 4 protons from the mitochondrial matrix. The protein is Cytochrome c oxidase subunit 3 (MT-CO3) of Loxodonta africana (African elephant).